A 292-amino-acid chain; its full sequence is 4-diphosphocytidyl-2-C-methyl-D-erythritol kinase (292 aa).

Lys13 is an active-site residue. 97-107 (PVAAGLAGGSS) serves as a coordination point for ATP. Asp139 is a catalytic residue.

It belongs to the GHMP kinase family. IspE subfamily.

It catalyses the reaction 4-CDP-2-C-methyl-D-erythritol + ATP = 4-CDP-2-C-methyl-D-erythritol 2-phosphate + ADP + H(+). Its pathway is isoprenoid biosynthesis; isopentenyl diphosphate biosynthesis via DXP pathway; isopentenyl diphosphate from 1-deoxy-D-xylulose 5-phosphate: step 3/6. In terms of biological role, catalyzes the phosphorylation of the position 2 hydroxy group of 4-diphosphocytidyl-2C-methyl-D-erythritol. The polypeptide is 4-diphosphocytidyl-2-C-methyl-D-erythritol kinase (Bacillus thuringiensis (strain Al Hakam)).